A 264-amino-acid polypeptide reads, in one-letter code: Undecaprenyl-diphosphatase (264 aa).

Transmembrane regions (helical) follow at residues 15 to 37 (GLTE…LLGF), 42 to 62 (AASF…VLYW), 84 to 104 (YLLF…HDFI), 108 to 128 (LFNP…ILIV), 143 to 163 (VTPK…WPGF), 182 to 202 (IAAE…TGYD), 217 to 237 (FLAV…KGFI), and 243 to 263 (LTLR…LFFW).

This sequence belongs to the UppP family.

It is found in the cell inner membrane. It carries out the reaction di-trans,octa-cis-undecaprenyl diphosphate + H2O = di-trans,octa-cis-undecaprenyl phosphate + phosphate + H(+). Its function is as follows. Catalyzes the dephosphorylation of undecaprenyl diphosphate (UPP). Confers resistance to bacitracin. This is Undecaprenyl-diphosphatase from Maridesulfovibrio salexigens (strain ATCC 14822 / DSM 2638 / NCIMB 8403 / VKM B-1763) (Desulfovibrio salexigens).